Reading from the N-terminus, the 448-residue chain is Bifunctional protein GlmU (448 aa).

Positions 1–232 are pyrophosphorylase; it reads MSDRSLLVVV…ADEVAGVNSR (232 aa). UDP-N-acetyl-alpha-D-glucosamine contacts are provided by residues 11–14, lysine 25, glutamine 78, and 83–84; these read LAAG and GT. A Mg(2+)-binding site is contributed by aspartate 108. UDP-N-acetyl-alpha-D-glucosamine-binding residues include glycine 144, glutamate 158, asparagine 173, and asparagine 230. Asparagine 230 serves as a coordination point for Mg(2+). The segment at 233–253 is linker; sequence VQLAEAEAILQRRLRLAAMAG. The segment at 254–448 is N-acetyltransferase; the sequence is GATLVAPETV…FRAARSKPKG (195 aa). 2 residues coordinate UDP-N-acetyl-alpha-D-glucosamine: arginine 319 and lysine 337. Catalysis depends on histidine 349, which acts as the Proton acceptor. Positions 352 and 363 each coordinate UDP-N-acetyl-alpha-D-glucosamine. Residues alanine 366, 372-373, threonine 409, and arginine 426 contribute to the acetyl-CoA site; that span reads NY.

It in the N-terminal section; belongs to the N-acetylglucosamine-1-phosphate uridyltransferase family. This sequence in the C-terminal section; belongs to the transferase hexapeptide repeat family. In terms of assembly, homotrimer. Mg(2+) serves as cofactor.

Its subcellular location is the cytoplasm. It carries out the reaction alpha-D-glucosamine 1-phosphate + acetyl-CoA = N-acetyl-alpha-D-glucosamine 1-phosphate + CoA + H(+). It catalyses the reaction N-acetyl-alpha-D-glucosamine 1-phosphate + UTP + H(+) = UDP-N-acetyl-alpha-D-glucosamine + diphosphate. The protein operates within nucleotide-sugar biosynthesis; UDP-N-acetyl-alpha-D-glucosamine biosynthesis; N-acetyl-alpha-D-glucosamine 1-phosphate from alpha-D-glucosamine 6-phosphate (route II): step 2/2. It functions in the pathway nucleotide-sugar biosynthesis; UDP-N-acetyl-alpha-D-glucosamine biosynthesis; UDP-N-acetyl-alpha-D-glucosamine from N-acetyl-alpha-D-glucosamine 1-phosphate: step 1/1. Its pathway is bacterial outer membrane biogenesis; LPS lipid A biosynthesis. Functionally, catalyzes the last two sequential reactions in the de novo biosynthetic pathway for UDP-N-acetylglucosamine (UDP-GlcNAc). The C-terminal domain catalyzes the transfer of acetyl group from acetyl coenzyme A to glucosamine-1-phosphate (GlcN-1-P) to produce N-acetylglucosamine-1-phosphate (GlcNAc-1-P), which is converted into UDP-GlcNAc by the transfer of uridine 5-monophosphate (from uridine 5-triphosphate), a reaction catalyzed by the N-terminal domain. This is Bifunctional protein GlmU from Xanthobacter autotrophicus (strain ATCC BAA-1158 / Py2).